The chain runs to 59 residues: Photosystem II reaction center protein K (59 aa).

Residues 1–22 (MLNIFSLICLNSDLYSSRFFLA) constitute a propeptide that is removed on maturation. A helical membrane pass occupies residues 38–58 (MPVIPLFFLLLAFVWQAAVSF).

It belongs to the PsbK family. PSII is composed of 1 copy each of membrane proteins PsbA, PsbB, PsbC, PsbD, PsbE, PsbF, PsbH, PsbI, PsbJ, PsbK, PsbL, PsbM, PsbT, PsbX, PsbY, PsbZ, Psb30/Ycf12, at least 3 peripheral proteins of the oxygen-evolving complex and a large number of cofactors. It forms dimeric complexes.

It localises to the plastid. Its subcellular location is the chloroplast thylakoid membrane. Its function is as follows. One of the components of the core complex of photosystem II (PSII). PSII is a light-driven water:plastoquinone oxidoreductase that uses light energy to abstract electrons from H(2)O, generating O(2) and a proton gradient subsequently used for ATP formation. It consists of a core antenna complex that captures photons, and an electron transfer chain that converts photonic excitation into a charge separation. In Oenothera elata subsp. hookeri (Hooker's evening primrose), this protein is Photosystem II reaction center protein K.